Reading from the N-terminus, the 315-residue chain is Protein sprouty homolog 2 (315 aa).

Over residues 1–14 (MEARAQSGSGSQPL) the composition is skewed to polar residues. 2 disordered regions span residues 1–38 (MEARAQSGSGSQPLLQAPRDSGRQRGEPDPRDALPQQV) and 51–140 (NTNE…GSSF). The segment covering 20–32 (DSGRQRGEPDPRD) has biased composition (basic and acidic residues). Residues 88-100 (PRQPSRPQHPPAH) show a composition bias toward pro residues. Residues 109–140 (RSISTVSSGSRSSTRTSTSSSSSEQRLLGSSF) are compositionally biased toward low complexity. The required for interaction with CAV1 stretch occupies residues 118–315 (SRSSTRTSTS…VPPRNFEKPT (198 aa)). The 115-residue stretch at 177–291 (KCEDCGKCKC…CYDRVNRPGC (115 aa)) folds into the SPR domain. The required for interaction with TESK1 stretch occupies residues 178–315 (CEDCGKCKCK…VPPRNFEKPT (138 aa)).

The protein belongs to the sprouty family. Forms heterodimers with SPRY1. Forms a tripartite complex containing GAB1, METTL13 and SPRY2. Within the complex interacts with METTL13. Interacts with RAF1. Interacts (via C-terminus) with TESK1 (via C-terminus); the interaction disrupts SPRY2 interaction with GRB2, potentially via disruption of SPRY2 serine dephosphorylation. Interacts with PPP2R1A/PP2A-A and PPP2CA/PP2A-C; the interaction with PPP2CA/PP2A-C is inhibited by interaction with TESK1, possibly by vesicular sequestration of SPRY2. Inhibition of the interaction with the serine/threonine-protein phosphatase 2A (PP2A) holoenzyme results in loss of PP2A-mediated dephosphorylation, resulting in the loss of SPRY2 interaction with GRB2. Interacts with GRB2. Interacts with CBL/C-CBL; the interaction inhibits CBL-mediated ubiquitination of EGFR. Interacts (via C-terminus) with CAV1 (via C-terminus). In terms of processing, cleaved at Pro-144 by the prolyl endopeptidase FAP (seprase) activity (in vitro).

The protein resides in the cytoplasm. The protein localises to the cytoskeleton. Its subcellular location is the cell projection. It localises to the ruffle membrane. Its function is as follows. Antagonist of fibroblast growth factor (FGF) pathways via inhibition of FGF-mediated phosphorylation of ERK1/2. Thereby acts as an antagonist of FGF-induced retinal lens fiber differentiation, may inhibit limb bud outgrowth and may negatively modulate respiratory organogenesis. Inhibits TGFB-induced epithelial-to-mesenchymal transition in retinal lens epithelial cells. Inhibits CBL/C-CBL-mediated EGFR ubiquitination. This Bos taurus (Bovine) protein is Protein sprouty homolog 2 (SPRY2).